The primary structure comprises 88 residues: Mitochondrial import inner membrane translocase subunit Tim10 (88 aa).

Residues 29-54 carry the Twin CX3C motif motif; it reads CHRKCVPPHYKEAELSKGEAVCLDRC. Disulfide bonds link C29–C54 and C33–C50.

This sequence belongs to the small Tim family. In terms of assembly, heterohexamer; composed of 3 copies of TIMM9 and 3 copies of TIMM10/TIM10A, named soluble 70 kDa complex. The complex forms a 6-bladed alpha-propeller structure and associates with the TIMM22 component of the TIM22 complex. Interacts with multi-pass transmembrane proteins in transit.

It is found in the mitochondrion inner membrane. In terms of biological role, mitochondrial intermembrane chaperone that participates in the import and insertion of multi-pass transmembrane proteins into the mitochondrial inner membrane. May also be required for the transfer of beta-barrel precursors from the TOM complex to the sorting and assembly machinery (SAM complex) of the outer membrane. Acts as a chaperone-like protein that protects the hydrophobic precursors from aggregation and guide them through the mitochondrial intermembrane space. This Danio rerio (Zebrafish) protein is Mitochondrial import inner membrane translocase subunit Tim10 (timm10).